A 196-amino-acid polypeptide reads, in one-letter code: uncharacterized protein (196 aa).

This is an uncharacterized protein from Sinorhizobium fredii (strain NBRC 101917 / NGR234).